The sequence spans 1330 residues: DNA-directed RNA polymerase subunit beta'' (1330 aa).

Residues C214, C282, C289, and C292 each coordinate Zn(2+).

The protein belongs to the RNA polymerase beta' chain family. RpoC2 subfamily. In plastids the minimal PEP RNA polymerase catalytic core is composed of four subunits: alpha, beta, beta', and beta''. When a (nuclear-encoded) sigma factor is associated with the core the holoenzyme is formed, which can initiate transcription. It depends on Zn(2+) as a cofactor.

The protein resides in the plastid. The protein localises to the chloroplast. The enzyme catalyses RNA(n) + a ribonucleoside 5'-triphosphate = RNA(n+1) + diphosphate. Functionally, DNA-dependent RNA polymerase catalyzes the transcription of DNA into RNA using the four ribonucleoside triphosphates as substrates. The sequence is that of DNA-directed RNA polymerase subunit beta'' from Physcomitrium patens (Spreading-leaved earth moss).